Here is a 235-residue protein sequence, read N- to C-terminus: Small ribosomal subunit protein uS2 (235 aa).

It belongs to the universal ribosomal protein uS2 family.

This Geobacillus sp. (strain WCH70) protein is Small ribosomal subunit protein uS2.